The chain runs to 218 residues: Urease accessory protein UreG (218 aa).

Position 22–29 (22–29) interacts with GTP; it reads GPVGSGKT.

The protein belongs to the SIMIBI class G3E GTPase family. UreG subfamily. In terms of assembly, homodimer. UreD, UreF and UreG form a complex that acts as a GTP-hydrolysis-dependent molecular chaperone, activating the urease apoprotein by helping to assemble the nickel containing metallocenter of UreC. The UreE protein probably delivers the nickel.

It localises to the cytoplasm. Facilitates the functional incorporation of the urease nickel metallocenter. This process requires GTP hydrolysis, probably effectuated by UreG. This is Urease accessory protein UreG from Polaromonas sp. (strain JS666 / ATCC BAA-500).